The sequence spans 254 residues: Alcohol dehydrogenase (254 aa).

10-33 (FVAGLGGIGLDTSREIVKSGPKNL) lines the NAD(+) pocket. Position 138 (serine 138) interacts with substrate. Tyrosine 151 acts as the Proton acceptor in catalysis.

The protein belongs to the short-chain dehydrogenases/reductases (SDR) family. In terms of assembly, homodimer.

The catalysed reaction is a primary alcohol + NAD(+) = an aldehyde + NADH + H(+). The enzyme catalyses a secondary alcohol + NAD(+) = a ketone + NADH + H(+). The chain is Alcohol dehydrogenase (Adh) from Drosophila mimica (Fruit fly).